We begin with the raw amino-acid sequence, 383 residues long: Serpin B5 (383 aa).

N-linked (GlcNAc...) asparagine glycosylation is found at N106, N133, N176, and N361.

Belongs to the serpin family. Ov-serpin subfamily.

It localises to the secreted. The protein localises to the extracellular space. May not exhibit serine protease inhibitory activity. This is Serpin B5 (serpinb5) from Xenopus laevis (African clawed frog).